The sequence spans 424 residues: Zona pellucida sperm-binding protein 3 (424 aa).

Positions 1-22 (MELSYRLFICLLLWGSTELCYP) are cleaved as a signal peptide. Gln23 bears the Pyrrolidone carboxylic acid mark. Residues 23–387 (QPLWLLQGGA…QWALPSDTSV (365 aa)) lie on the Extracellular side of the membrane. The ZP domain occupies 45–307 (ECQEATLMVM…KACSFSKPSN (263 aa)). Intrachain disulfides connect Cys46-Cys140 and Cys78-Cys99. N-linked (GlcNAc...) asparagine glycans are attached at residues Asn125 and Asn147. Residues Thr156, Thr162, and Thr163 are each glycosylated (O-linked (GalNAc...) threonine). 2 disulfides stabilise this stretch: Cys217/Cys282 and Cys239/Cys300. An N-linked (GlcNAc...) asparagine glycan is attached at Asn272. The tract at residues 330–356 (PSHSRRQPHVMSQWSRSASRNRRHVTE) is disordered. Positions 351-424 (RRHVTEEADV…TASHPVSASE (74 aa)) are cleaved as a propeptide — removed in mature form. The helical transmembrane segment at 388–408 (VLLGVGLAVVVSLTLTAVILV) threads the bilayer. The Cytoplasmic portion of the chain corresponds to 409–424 (LTRRCRTASHPVSASE).

Belongs to the ZP domain family. ZPC subfamily. As to quaternary structure, polymers of ZP2 and ZP3 organized into long filaments cross-linked by ZP1 homodimers. Interacts with ZP1 and ZP2. Post-translationally, proteolytically cleaved before the transmembrane segment to yield the secreted ectodomain incorporated in the zona pellucida. N-glycosylated. In terms of processing, O-glycosylated; removal of O-linked glycans may play an important role in the post-fertilization block to polyspermy. As to expression, expressed in oocytes (at protein level).

It is found in the zona pellucida. The protein localises to the cell membrane. Its function is as follows. Component of the zona pellucida, an extracellular matrix surrounding oocytes which mediates sperm binding, induction of the acrosome reaction and prevents post-fertilization polyspermy. The zona pellucida is composed of 3 to 4 glycoproteins, ZP1, ZP2, ZP3, and ZP4. ZP3 is essential for sperm binding and zona matrix formation. The polypeptide is Zona pellucida sperm-binding protein 3 (ZP3) (Homo sapiens (Human)).